Here is a 150-residue protein sequence, read N- to C-terminus: Large ribosomal subunit protein bL9 (150 aa).

Belongs to the bacterial ribosomal protein bL9 family.

Binds to the 23S rRNA. This Vibrio atlanticus (strain LGP32) (Vibrio splendidus (strain Mel32)) protein is Large ribosomal subunit protein bL9.